Consider the following 224-residue polypeptide: MTPSLGLIFWQSVIFLISFIILSKFAWNPINKLLEKREKYIIDSINNAEKAKEYLKNIKLKKKNILKNTEKMKYFIINEAFKKKEQIEKEAKKKAKLESYLIINKTQLLIENKKKIAIEKIKNEILNMSIIISEKILNKELEINEKNNNYFFNKKLLIIMKFSYKIFIKRYAKGFFFLVFNSKKEIFIKNEIEKFFSYKKELYKKNYFKFKYTFFKKKRKDNFF.

A helical membrane pass occupies residues 2 to 22; sequence TPSLGLIFWQSVIFLISFIIL.

This sequence belongs to the ATPase B chain family. In terms of assembly, F-type ATPases have 2 components, F(1) - the catalytic core - and F(0) - the membrane proton channel. F(1) has five subunits: alpha(3), beta(3), gamma(1), delta(1), epsilon(1). F(0) has three main subunits: a(1), b(2) and c(10-14). The alpha and beta chains form an alternating ring which encloses part of the gamma chain. F(1) is attached to F(0) by a central stalk formed by the gamma and epsilon chains, while a peripheral stalk is formed by the delta and b chains.

It localises to the cell membrane. Functionally, f(1)F(0) ATP synthase produces ATP from ADP in the presence of a proton or sodium gradient. F-type ATPases consist of two structural domains, F(1) containing the extramembraneous catalytic core and F(0) containing the membrane proton channel, linked together by a central stalk and a peripheral stalk. During catalysis, ATP synthesis in the catalytic domain of F(1) is coupled via a rotary mechanism of the central stalk subunits to proton translocation. Its function is as follows. Component of the F(0) channel, it forms part of the peripheral stalk, linking F(1) to F(0). This chain is ATP synthase subunit b, found in Karelsulcia muelleri (strain GWSS) (Sulcia muelleri).